A 230-amino-acid chain; its full sequence is Protein GrpE (230 aa).

Disordered regions lie at residues 1–26 and 209–230; these read MADE…DREA and GVSK…EDNA. Positions 221-230 are enriched in polar residues; it reads NGASTSEDNA.

The protein belongs to the GrpE family. Homodimer.

Its subcellular location is the cytoplasm. Functionally, participates actively in the response to hyperosmotic and heat shock by preventing the aggregation of stress-denatured proteins, in association with DnaK and GrpE. It is the nucleotide exchange factor for DnaK and may function as a thermosensor. Unfolded proteins bind initially to DnaJ; upon interaction with the DnaJ-bound protein, DnaK hydrolyzes its bound ATP, resulting in the formation of a stable complex. GrpE releases ADP from DnaK; ATP binding to DnaK triggers the release of the substrate protein, thus completing the reaction cycle. Several rounds of ATP-dependent interactions between DnaJ, DnaK and GrpE are required for fully efficient folding. The protein is Protein GrpE of Brucella suis biovar 1 (strain 1330).